A 263-amino-acid polypeptide reads, in one-letter code: 5'-nucleotidase SurE (263 aa).

4 residues coordinate a divalent metal cation: Asp8, Asp9, Ser40, and Asn98.

It belongs to the SurE nucleotidase family. It depends on a divalent metal cation as a cofactor.

The protein resides in the cytoplasm. The enzyme catalyses a ribonucleoside 5'-phosphate + H2O = a ribonucleoside + phosphate. Its function is as follows. Nucleotidase that shows phosphatase activity on nucleoside 5'-monophosphates. The chain is 5'-nucleotidase SurE from Gloeobacter violaceus (strain ATCC 29082 / PCC 7421).